A 164-amino-acid chain; its full sequence is Peptide deformylase (164 aa).

Residues Cys87 and His129 each coordinate Fe cation. Glu130 is a catalytic residue. His133 provides a ligand contact to Fe cation.

This sequence belongs to the polypeptide deformylase family. It depends on Fe(2+) as a cofactor.

It carries out the reaction N-terminal N-formyl-L-methionyl-[peptide] + H2O = N-terminal L-methionyl-[peptide] + formate. Removes the formyl group from the N-terminal Met of newly synthesized proteins. Requires at least a dipeptide for an efficient rate of reaction. N-terminal L-methionine is a prerequisite for activity but the enzyme has broad specificity at other positions. The chain is Peptide deformylase from Thermotoga sp. (strain RQ2).